The primary structure comprises 275 residues: Serine/threonine-protein phosphatase PGAM5, mitochondrial (275 aa).

The helical transmembrane segment at 7–24 threads the bilayer; that stretch reads LIAGGSAAAAILGVVAAG.

It belongs to the phosphoglycerate mutase family. BPG-dependent PGAM subfamily. Post-translationally, phosphorylated by the RIPK1/RIPK3 complex under necrotic conditions. This phosphorylation increases PGAM5 phosphatase activity.

Its subcellular location is the mitochondrion outer membrane. The catalysed reaction is O-phospho-L-seryl-[protein] + H2O = L-seryl-[protein] + phosphate. The enzyme catalyses O-phospho-L-threonyl-[protein] + H2O = L-threonyl-[protein] + phosphate. In terms of biological role, displays phosphatase activity for serine/threonine residues. Has apparently no phosphoglycerate mutase activity. May be regulator of mitochondrial dynamics. May be a central mediator for programmed necrosis. The sequence is that of Serine/threonine-protein phosphatase PGAM5, mitochondrial (pgam5) from Xenopus laevis (African clawed frog).